A 146-amino-acid polypeptide reads, in one-letter code: Hemoglobin subunit beta (146 aa).

Position 1 is an N-acetylvaline (V1). The region spanning 2-146 is the Globin domain; sequence HLTPEEKSAV…VANALAHKYH (145 aa). A Phosphothreonine modification is found at T12. Residue S44 is modified to Phosphoserine. K59 carries the N6-acetyllysine modification. Residue H63 participates in heme b binding. Residue K82 is modified to N6-acetyllysine. Heme b is bound at residue H92. Residue C93 is modified to S-nitrosocysteine. K144 carries the N6-acetyllysine modification.

Belongs to the globin family. Heterotetramer of two alpha chains and two beta chains. Red blood cells.

Involved in oxygen transport from the lung to the various peripheral tissues. This chain is Hemoglobin subunit beta (HBB), found in Hylobates lar (Lar gibbon).